We begin with the raw amino-acid sequence, 750 residues long: Photosystem I P700 chlorophyll a apoprotein A1 (750 aa).

8 helical membrane passes run 70–93, 156–179, 195–219, 291–309, 346–369, 385–411, 433–455, and 531–549; these read VFSAHFGQLSIIFLWLSGMYFHGA, LYCTAIGALVFAALMLFAGWFHYH, LNHHLAGLLGLGSLSWAGHQVHVSL, IAHHHLAIAILFLVAGHMY, WHAQLSLNLAMLGSLTIVVAHHMY, LSLFTHHMWIGGFLIVGAAAHAAIFMV, AIISHLNWVCIFLGFHSFGLYIH, and FLVHHIHAFTIHVTVLILL. Residues cysteine 573 and cysteine 582 each coordinate [4Fe-4S] cluster. The next 2 membrane-spanning stretches (helical) occupy residues 589-610 and 664-686; these read HVFLGLFWMYNAISVVIFHFSW and LSAYGLFFLGAHFVWAFSLMFLF. Histidine 675 lines the chlorophyll a' pocket. Residues methionine 683 and tyrosine 691 each coordinate chlorophyll a. Residue tryptophan 692 participates in phylloquinone binding. Residues 724 to 744 form a helical membrane-spanning segment; that stretch reads AVGVTHYLLGGIATTWAFFLA.

Belongs to the PsaA/PsaB family. The PsaA/B heterodimer binds the P700 chlorophyll special pair and subsequent electron acceptors. PSI consists of a core antenna complex that captures photons, and an electron transfer chain that converts photonic excitation into a charge separation. The eukaryotic PSI reaction center is composed of at least 11 subunits. The cofactor is P700 is a chlorophyll a/chlorophyll a' dimer, A0 is one or more chlorophyll a, A1 is one or both phylloquinones and FX is a shared 4Fe-4S iron-sulfur center..

It is found in the plastid. The protein localises to the chloroplast thylakoid membrane. It catalyses the reaction reduced [plastocyanin] + hnu + oxidized [2Fe-2S]-[ferredoxin] = oxidized [plastocyanin] + reduced [2Fe-2S]-[ferredoxin]. PsaA and PsaB bind P700, the primary electron donor of photosystem I (PSI), as well as the electron acceptors A0, A1 and FX. PSI is a plastocyanin-ferredoxin oxidoreductase, converting photonic excitation into a charge separation, which transfers an electron from the donor P700 chlorophyll pair to the spectroscopically characterized acceptors A0, A1, FX, FA and FB in turn. Oxidized P700 is reduced on the lumenal side of the thylakoid membrane by plastocyanin. In Populus trichocarpa (Western balsam poplar), this protein is Photosystem I P700 chlorophyll a apoprotein A1.